The primary structure comprises 388 residues: Succinate--CoA ligase [ADP-forming] subunit beta (388 aa).

Residues 9 to 244 (KDLLVSYDIA…PSQENVRDVL (236 aa)) enclose the ATP-grasp domain. ATP contacts are provided by residues lysine 46, 53–55 (GRG), valine 102, and glutamate 107. Mg(2+) contacts are provided by asparagine 199 and aspartate 213. Substrate contacts are provided by residues asparagine 264 and 321 to 323 (GIM).

This sequence belongs to the succinate/malate CoA ligase beta subunit family. In terms of assembly, heterotetramer of two alpha and two beta subunits. Mg(2+) is required as a cofactor.

It catalyses the reaction succinate + ATP + CoA = succinyl-CoA + ADP + phosphate. The enzyme catalyses GTP + succinate + CoA = succinyl-CoA + GDP + phosphate. Its pathway is carbohydrate metabolism; tricarboxylic acid cycle; succinate from succinyl-CoA (ligase route): step 1/1. Succinyl-CoA synthetase functions in the citric acid cycle (TCA), coupling the hydrolysis of succinyl-CoA to the synthesis of either ATP or GTP and thus represents the only step of substrate-level phosphorylation in the TCA. The beta subunit provides nucleotide specificity of the enzyme and binds the substrate succinate, while the binding sites for coenzyme A and phosphate are found in the alpha subunit. The sequence is that of Succinate--CoA ligase [ADP-forming] subunit beta from Chlamydia caviae (strain ATCC VR-813 / DSM 19441 / 03DC25 / GPIC) (Chlamydophila caviae).